The primary structure comprises 562 residues: Adenylate kinase isoenzyme 5 (562 aa).

2 adenylate kinase regions span residues 133-316 (KIIL…VAVD) and 377-559 (KIIF…TAID). Residue 142–147 (GSGKGT) coordinates ATP. Positions 162–193 (SVGELLRKKIHSASSNRKWSLIAKIITNGELA) are NMP 1. AMP-binding positions include Arg-168, 191–193 (ELA), 219–222 (GFPR), and Gln-226. Residues 256 to 266 (KRAEQQGRPDD) are LID 1. Arg-257 is an ATP binding site. Residues Arg-263 and Arg-274 each contribute to the AMP site. An ATP-binding site is contributed by 386–391 (GSGKGT). Residues 406 to 435 (STGELLRQELTSESERSKLIRDIMERGDLV) form an NMP 2 region. AMP-binding positions include Thr-407, Arg-412, 433–435 (DLV), 462–465 (GYPR), and Gln-469. The tract at residues 499-509 (QRSQSSQRGED) is LID 2. Arg-500 serves as a coordination point for ATP. 2 residues coordinate AMP: Arg-506 and Arg-517. ATP is bound at residue Gly-545.

It belongs to the adenylate kinase family. Monomer. Interacts with YWHAZ. In terms of tissue distribution, brain specific.

Its subcellular location is the cytoplasm. The enzyme catalyses AMP + ATP = 2 ADP. It catalyses the reaction a 2'-deoxyribonucleoside 5'-diphosphate + ATP = a 2'-deoxyribonucleoside 5'-triphosphate + ADP. It carries out the reaction a ribonucleoside 5'-diphosphate + ATP = a ribonucleoside 5'-triphosphate + ADP. Its function is as follows. Nucleoside monophosphate (NMP) kinase that catalyzes the reversible transfer of the terminal phosphate group between nucleoside triphosphates and monophosphates. Active on AMP and dAMP with ATP as a donor. When GTP is used as phosphate donor, the enzyme phosphorylates AMP, CMP, and to a small extent dCMP. Also displays broad nucleoside diphosphate kinase activity. The chain is Adenylate kinase isoenzyme 5 (Ak5) from Mus musculus (Mouse).